The following is an 87-amino-acid chain: FXYD domain-containing ion transport regulator 3 (87 aa).

Residues 1–20 (MQKVTLGLLVFLAGFPVLDA) form the signal peptide. The Extracellular segment spans residues 21–38 (NDLEDKNSPFYYDWHSLQ). The chain crosses the membrane as a helical span at residues 39–59 (VGGLICAGVLCAMGIIIVMSA). Topologically, residues 60 to 87 (KCKCKFGQKSGHHPGETPPLITPGSAQS) are cytoplasmic. The disordered stretch occupies residues 66–87 (GQKSGHHPGETPPLITPGSAQS).

Belongs to the FXYD family. In terms of assembly, regulatory subunit of the sodium/potassium-transporting ATPase which is composed of a catalytic alpha subunit, a non-catalytic beta subunit and an additional regulatory subunit. Interacts with catalytic alpha subunit ATP1A1. Also interacts with non-catalytic beta subunit ATP1B1. Interacts with the ATP1A1-ATP1B1, ATP1A2-ATP1B1 and ATP1A3-ATP1B1 NKA isozymes. Glutathionylated. In terms of tissue distribution, isoform 1: Expressed mainly in differentiated cells (at protein level). Isoform 2: Expressed mainly in undifferentiated cells (at protein level).

Its subcellular location is the cell membrane. Functionally, associates with and regulates the activity of the sodium/potassium-transporting ATPase (NKA) which transports Na(+) out of the cell and K(+) into the cell. Reduces glutathionylation of the NKA beta-1 subunit ATP1B1, thus reversing glutathionylation-mediated inhibition of ATP1B1. Induces a hyperpolarization-activated chloride current when expressed in Xenopus oocytes. In terms of biological role, decreases the apparent K+ and Na+ affinity of the sodium/potassium-transporting ATPase over a large range of membrane potentials. Decreases the apparent K+ affinity of the sodium/potassium-transporting ATPase only at slightly negative and positive membrane potentials and increases the apparent Na+ affinity over a large range of membrane potentials. The chain is FXYD domain-containing ion transport regulator 3 (FXYD3) from Homo sapiens (Human).